The sequence spans 146 residues: MNMFFDWWFATSPRLRQLCWAFWLLMLVTLIFLSSTHHEERDALIRLRASHHQQWAALYRLVDTAPFSEEKTLPFSPLDFQLSGAQLVSWHPSAQGGELALKTLWEAVPSAFTRLAERNVSVSRFSLSVEGDDLLFTLQLETPHEG.

The chain crosses the membrane as a helical span at residues 20–37 (WAFWLLMLVTLIFLSSTH).

Its subcellular location is the cell inner membrane. Required for the use of extracellular DNA as a nutrient. The chain is DNA utilization protein HofO (hofO) from Escherichia coli (strain K12).